We begin with the raw amino-acid sequence, 89 residues long: Elongation factor 1-beta (89 aa).

Belongs to the EF-1-beta/EF-1-delta family.

In terms of biological role, promotes the exchange of GDP for GTP in EF-1-alpha/GDP, thus allowing the regeneration of EF-1-alpha/GTP that could then be used to form the ternary complex EF-1-alpha/GTP/AAtRNA. The sequence is that of Elongation factor 1-beta from Methanococcus maripaludis (strain DSM 14266 / JCM 13030 / NBRC 101832 / S2 / LL).